An 86-amino-acid chain; its full sequence is Large ribosomal subunit protein bL31B (86 aa).

It belongs to the bacterial ribosomal protein bL31 family. Type B subfamily. In terms of assembly, part of the 50S ribosomal subunit.

The protein is Large ribosomal subunit protein bL31B of Cupriavidus taiwanensis (strain DSM 17343 / BCRC 17206 / CCUG 44338 / CIP 107171 / LMG 19424 / R1) (Ralstonia taiwanensis (strain LMG 19424)).